The following is a 1950-amino-acid chain: E3 ubiquitin-protein ligase UBR1 (1950 aa).

Zn(2+) contacts are provided by histidine 118, cysteine 123, cysteine 136, cysteine 139, cysteine 148, cysteine 151, histidine 157, histidine 160, histidine 161, cysteine 175, cysteine 177, and cysteine 189. A UBR-type zinc finger spans residues 121–194 (RNCGRKFKIG…SPLHCKAEEQ (74 aa)). A phosphoserine mark is found at serine 296 and serine 300. A ubiquitin-binding loop region spans residues 678 to 681 (HVLH). Aspartate 952 provides a ligand contact to Zn(2+). The tract at residues 1165–1200 (KERKRRLAKKHQARLLAKFNNQQTKFMKEHESEFDE) is UBC2-binding region (U2BR). The Zn(2+) site is built by cysteine 1220, cysteine 1223, cysteine 1295, histidine 1297, histidine 1300, cysteine 1303, cysteine 1320, and cysteine 1323. Residues 1220 to 1324 (CALCQDSSST…SNAFICPLCQ (105 aa)) form an RING-type; atypical zinc finger. Residues 1333 to 1665 (LCQTSKANTG…YEYCGIIKLI (333 aa)) form a cap helical domain (CHD) region. 6 residues coordinate Zn(2+): cysteine 1703, cysteine 1706, histidine 1722, cysteine 1727, histidine 1763, and aspartate 1775. Disordered regions lie at residues 1826-1846 (RPRRIPPTDEDDEDMEEGEDG) and 1893-1950 (TLQP…REIW). Composition is skewed to acidic residues over residues 1833–1846 (TDEDDEDMEEGEDG) and 1934–1950 (DEDDSDDNDDSDEREIW). Serine 1938 bears the Phosphoserine mark.

The protein belongs to the E3 ubiquitin-protein ligase UBR1-like family. In terms of assembly, interacts with UBC2. Interacts with RPN2, RPT1 and RPT6 from the 26S proteasome.

It carries out the reaction S-ubiquitinyl-[E2 ubiquitin-conjugating enzyme]-L-cysteine + [acceptor protein]-L-lysine = [E2 ubiquitin-conjugating enzyme]-L-cysteine + N(6)-ubiquitinyl-[acceptor protein]-L-lysine.. It participates in protein modification; protein ubiquitination. Its function is as follows. Ubiquitin ligase protein which is a component of the N-end rule pathway. Recognizes and binds to proteins bearing specific N-terminal residues that are destabilizing according to the N-end rule, leading to their ubiquitination and subsequent degradation. Recognizes both type-1 and type-2 N-degrons, containing positively charged amino acids (Arg, Lys and His) and bulky and hydrophobic amino acids, respectively. The protein is E3 ubiquitin-protein ligase UBR1 of Saccharomyces cerevisiae (strain ATCC 204508 / S288c) (Baker's yeast).